We begin with the raw amino-acid sequence, 109 residues long: Cell division protein ZapA (109 aa).

Positions 22 to 99 (EQQDALNLAA…IEQALLEQGR (78 aa)) form a coiled coil.

This sequence belongs to the ZapA family. Type 1 subfamily. As to quaternary structure, homodimer. Interacts with FtsZ.

Its subcellular location is the cytoplasm. Functionally, activator of cell division through the inhibition of FtsZ GTPase activity, therefore promoting FtsZ assembly into bundles of protofilaments necessary for the formation of the division Z ring. It is recruited early at mid-cell but it is not essential for cell division. This Erwinia tasmaniensis (strain DSM 17950 / CFBP 7177 / CIP 109463 / NCPPB 4357 / Et1/99) protein is Cell division protein ZapA.